A 178-amino-acid chain; its full sequence is uncharacterized protein (178 aa).

One can recognise an MSP domain in the interval 52–177 (HIAIEDRAHQ…RRLPASFLST (126 aa)).

This is an uncharacterized protein from Caenorhabditis elegans.